The primary structure comprises 118 residues: Small ribosomal subunit protein uS13 (118 aa).

The segment at 95-118 (LPVRGQRTRTNARTRKGPKKLINK) is disordered.

The protein belongs to the universal ribosomal protein uS13 family. In terms of assembly, part of the 30S ribosomal subunit. Forms a loose heterodimer with protein S19. Forms two bridges to the 50S subunit in the 70S ribosome.

Functionally, located at the top of the head of the 30S subunit, it contacts several helices of the 16S rRNA. In the 70S ribosome it contacts the 23S rRNA (bridge B1a) and protein L5 of the 50S subunit (bridge B1b), connecting the 2 subunits; these bridges are implicated in subunit movement. Contacts the tRNAs in the A and P-sites. This chain is Small ribosomal subunit protein uS13, found in Blochmanniella floridana.